A 437-amino-acid polypeptide reads, in one-letter code: Sorting nexin-30 (437 aa).

Disordered regions lie at residues methionine 1–leucine 44 and leucine 54–serine 73. At threonine 38 the chain carries Phosphothreonine. Position 40 is a phosphoserine (serine 40). Low complexity predominate over residues alanine 63–serine 73. Residues arginine 89–alanine 210 form the PX domain. The a 1,2-diacyl-sn-glycero-3-phospho-(1D-myo-inositol-3-phosphate) site is built by arginine 132, glutamine 134, lysine 162, and arginine 176. The BAR domain maps to lysine 234 to lysine 437.

The protein belongs to the sorting nexin family. In terms of assembly, heterodimer; heterodimerizes with SNX4.

Its subcellular location is the early endosome membrane. Involved in the regulation of endocytosis and in several stages of intracellular trafficking. Together with SNX4, involved in autophagosome assembly. This Homo sapiens (Human) protein is Sorting nexin-30.